Reading from the N-terminus, the 318-residue chain is Extracellular metalloprotease AO090012001025 (318 aa).

The first 23 residues, 1–23, serve as a signal peptide directing secretion; it reads MSHFPTLHILILVIANLQIQCFA. Residues Asn-106, Asn-121, and Asn-193 are each glycosylated (N-linked (GlcNAc...) asparagine). His-229 lines the Zn(2+) pocket. Glu-230 is an active-site residue. His-233 contacts Zn(2+). Residues Cys-268 and Cys-295 are joined by a disulfide bond.

This sequence belongs to the peptidase M43B family.

It is found in the secreted. Secreted metalloproteinase that allows assimilation of proteinaceous substrates. This Aspergillus oryzae (strain ATCC 42149 / RIB 40) (Yellow koji mold) protein is Extracellular metalloprotease AO090012001025.